Here is a 1044-residue protein sequence, read N- to C-terminus: Isoleucine--tRNA ligase (1044 aa).

The 'HIGH' region signature appears at 49 to 59 (PYCSGRIHLGT). Positions 591–595 (KMSKS) match the 'KMSKS' region motif. K594 contributes to the ATP binding site.

It belongs to the class-I aminoacyl-tRNA synthetase family. IleS type 2 subfamily. As to quaternary structure, monomer. The cofactor is Zn(2+).

The protein resides in the cytoplasm. The catalysed reaction is tRNA(Ile) + L-isoleucine + ATP = L-isoleucyl-tRNA(Ile) + AMP + diphosphate. Its function is as follows. Catalyzes the attachment of isoleucine to tRNA(Ile). As IleRS can inadvertently accommodate and process structurally similar amino acids such as valine, to avoid such errors it has two additional distinct tRNA(Ile)-dependent editing activities. One activity is designated as 'pretransfer' editing and involves the hydrolysis of activated Val-AMP. The other activity is designated 'posttransfer' editing and involves deacylation of mischarged Val-tRNA(Ile). The protein is Isoleucine--tRNA ligase of Methanothermobacter thermautotrophicus (strain ATCC 29096 / DSM 1053 / JCM 10044 / NBRC 100330 / Delta H) (Methanobacterium thermoautotrophicum).